The chain runs to 467 residues: Hydroxymethylglutaryl-CoA synthase erg13A (467 aa).

Ala-35 is a (3S)-3-hydroxy-3-methylglutaryl-CoA binding site. Glu-86 functions as the Proton donor/acceptor in the catalytic mechanism. The (3S)-3-hydroxy-3-methylglutaryl-CoA site is built by Cys-118, Thr-160, Ser-209, His-259, Lys-268, Asn-334, and Ser-368. Catalysis depends on Cys-118, which acts as the Acyl-thioester intermediate. His-259 serves as the catalytic Proton donor/acceptor.

The protein belongs to the thiolase-like superfamily. HMG-CoA synthase family.

It carries out the reaction acetoacetyl-CoA + acetyl-CoA + H2O = (3S)-3-hydroxy-3-methylglutaryl-CoA + CoA + H(+). Its pathway is metabolic intermediate biosynthesis; (R)-mevalonate biosynthesis; (R)-mevalonate from acetyl-CoA: step 2/3. Its function is as follows. Hydroxymethylglutaryl-CoA synthase; part of the first module of ergosterol biosynthesis pathway that includes the early steps of the pathway, conserved across all eukaryotes, and which results in the formation of mevalonate from acetyl-coenzyme A (acetyl-CoA). Erg13A and erg13B condense acetyl-CoA with acetoacetyl-CoA to form hydroxymethylglutaryl-CoA (HMG-CoA). The first module starts with the action of the cytosolic acetyl-CoA acetyltransferase erg10B that catalyzes the formation of acetoacetyl-CoA. The hydroxymethylglutaryl-CoA synthases erg13A and erg13B then condense acetyl-CoA with acetoacetyl-CoA to form HMG-CoA. The rate-limiting step of the early module is the reduction to mevalonate by the 3-hydroxy-3-methylglutaryl-coenzyme A (HMG-CoA) reductases hmg1 and hmg2. Mevalonate is also a precursor for the extracellular siderophore triacetylfusarinine C (TAFC). The sequence is that of Hydroxymethylglutaryl-CoA synthase erg13A from Aspergillus fumigatus (strain ATCC MYA-4609 / CBS 101355 / FGSC A1100 / Af293) (Neosartorya fumigata).